A 297-amino-acid chain; its full sequence is 2-dehydropantoate 2-reductase (297 aa).

NADP(+) contacts are provided by residues 11-16, N107, and A133; that span reads GAGAMG. A substrate-binding site is contributed by N107. K187 acts as the Proton donor in catalysis. 4 residues coordinate substrate: N191, N195, N205, and S251. E263 serves as a coordination point for NADP(+).

Belongs to the ketopantoate reductase family.

The protein localises to the cytoplasm. The enzyme catalyses (R)-pantoate + NADP(+) = 2-dehydropantoate + NADPH + H(+). The protein operates within cofactor biosynthesis; (R)-pantothenate biosynthesis; (R)-pantoate from 3-methyl-2-oxobutanoate: step 2/2. Catalyzes the NADPH-dependent reduction of ketopantoate into pantoic acid. In Listeria monocytogenes serovar 1/2a (strain ATCC BAA-679 / EGD-e), this protein is 2-dehydropantoate 2-reductase.